The primary structure comprises 198 residues: MICOS complex subunit MIC26 (198 aa).

The first 25 residues, 1-25 (MFKVIHRYVGPASLSLLTFKVYASS), serve as a signal peptide directing secretion. Residues 108 to 128 (PGFFPRLGVIGFAGVVGLVLA) form a helical membrane-spanning segment. An O-linked (Xyl...) (chondroitin sulfate) serine glycan is attached at Ser162.

This sequence belongs to the apolipoprotein O/MICOS complex subunit Mic27 family. As to quaternary structure, component of the mitochondrial contact site and cristae organizing system (MICOS) complex, composed of at least MICOS10/MIC10, CHCHD3/MIC19, CHCHD6/MIC25, APOOL/MIC27, IMMT/MIC60, APOO/MIC23/MIC26 and MICOS13/MIC13. This complex was also known under the names MINOS or MitOS complex. The MICOS complex associates with mitochondrial outer membrane proteins SAMM50, MTX1 and MTX2 (together described as components of the mitochondrial outer membrane sorting assembly machinery (SAM) complex) and DNAJC11, mitochondrial inner membrane protein TMEM11 and with HSPA9. The MICOS and SAM complexes together with DNAJC11 are part of a large protein complex spanning both membranes termed the mitochondrial intermembrane space bridging (MIB) complex. Interacts with IMMT/MIC60. Interacts with MICOS10/MIC10 and APOOL/MIC27. O-glycosylation; glycosaminoglycan of chondroitin-sulfate type.

It localises to the mitochondrion inner membrane. The protein localises to the secreted. It is found in the mitochondrion. The protein resides in the endoplasmic reticulum membrane. Its subcellular location is the golgi apparatus membrane. Its function is as follows. Component of the MICOS complex, a large protein complex of the mitochondrial inner membrane that plays crucial roles in the maintenance of crista junctions, inner membrane architecture, and formation of contact sites to the outer membrane. Plays a crucial role in crista junction formation and mitochondrial function. Can induce cardiac lipotoxicity by enhancing mitochondrial respiration and fatty acid metabolism in cardiac myoblasts. Promotes cholesterol efflux from macrophage cells. Detected in HDL, LDL and VLDL. Secreted by a microsomal triglyceride transfer protein (MTTP)-dependent mechanism, probably as a VLDL-associated protein that is subsequently transferred to HDL. This Bos taurus (Bovine) protein is MICOS complex subunit MIC26 (APOO).